Here is a 725-residue protein sequence, read N- to C-terminus: MDTFITRNFQTTIIQKAKNTMAEFMEDPELQPAMLFNICVHLEVCYVISDMNFLDEEGKAYTALEGQGKEQNLRPQYEVIEGMPRNIAWMVQRSLAQEHGIETPKYLADLFDYKTKRFIEVGITKGLADDYFWKKKEKLGNSMELMIFSYNQDYSLSNESSLDEEGKGRVLSRLTELQAELSLKNLWQVLIGEEDIEKGIDFKLGQTISRLRDISVPAGFSNFEGMRSYIDNIDPKGAIERNLARMSPLVSVTPKKLKWEDLRPIGPHIYNHELPEVPYNAFLLMSDELGLANMTEGKSKKPKTLAKECLEKYSTLRDQTDPILIMKSEKANENFLWKLWRDCVNTISNEETSNELQKTNYAKWATGDGLTYQKIMKEVAIDDETMCQEEPKIPNKCRVAAWVQTEMNLLSTLTSKRALDLPEIGPDVAPVEHVGSERRKYFVNEINYCKASTVMMKYVLFHTSLLNESNASMGKYKVIPITNRVNEKGESFDMLYGLAVKGQSHLRGDTDVVTVVTFEFSSTDPRVDSGKWPKYTVFRIGSLFVSGREKSVYLYCRVNGTNKIQMKWGMEARRCLLQSMQQMEAIVEQESSIQGYDMTKACFKEDRVNSPKTFSIGTQEGKLVKGSFGKALRVIFTKCLMHYVFGNAQLEGFSAESRRLLLLIQALKDRKGPWVFDLEGMYSGIEECISNNPWVIQSAYWFNEWLGFEKEGSKVLESVDEIMDE.

The Mn(2+) site is built by H41, E81, D109, E120, and V121. The Nuclear localization signal 1 (NLS1) motif lies at 125–140 (KGLADDYFWKKKEKLG). The Nuclear localization signal 2 (NLS2) signature appears at 183 to 244 (LKNLWQVLIG…PKGAIERNLA (62 aa)).

It belongs to the influenza viruses PA family. As to quaternary structure, influenza RNA polymerase is composed of three subunits: PB1, PB2 and PA. Interacts (via C-terminus) with PB1 (via N-terminus). Requires Mn(2+) as cofactor. Phosphorylated on serines and threonines by host kinases, including human casein kinase II.

It is found in the host cytoplasm. The protein resides in the host nucleus. Functionally, plays an essential role in viral RNA transcription and replication by forming the heterotrimeric polymerase complex together with PB1 and PB2 subunits. The complex transcribes viral mRNAs by using a unique mechanism called cap-snatching. It consists in the hijacking and cleavage of host capped pre-mRNAs. These short capped RNAs are then used as primers for viral mRNAs. The PB2 subunit is responsible for the binding of the 5' cap of cellular pre-mRNAs which are subsequently cleaved after 10-13 nucleotides by the PA subunit that carries the endonuclease activity. The protein is Polymerase acidic protein of Homo sapiens (Human).